We begin with the raw amino-acid sequence, 716 residues long: DNA ligase (716 aa).

Residues 42–46, 91–92, and E125 each bind NAD(+); these read DAEYD and SL. Catalysis depends on K127, which acts as the N6-AMP-lysine intermediate. Residues R148, E184, K300, and K324 each contribute to the NAD(+) site. Residues C429, C432, C447, and C453 each contribute to the Zn(2+) site. The BRCT domain occupies 638–716; it reads TASSPIAGKI…EEAWLQLIEG (79 aa).

Belongs to the NAD-dependent DNA ligase family. LigA subfamily. Mg(2+) serves as cofactor. It depends on Mn(2+) as a cofactor.

The catalysed reaction is NAD(+) + (deoxyribonucleotide)n-3'-hydroxyl + 5'-phospho-(deoxyribonucleotide)m = (deoxyribonucleotide)n+m + AMP + beta-nicotinamide D-nucleotide.. Its function is as follows. DNA ligase that catalyzes the formation of phosphodiester linkages between 5'-phosphoryl and 3'-hydroxyl groups in double-stranded DNA using NAD as a coenzyme and as the energy source for the reaction. It is essential for DNA replication and repair of damaged DNA. This chain is DNA ligase, found in Bartonella henselae (strain ATCC 49882 / DSM 28221 / CCUG 30454 / Houston 1) (Rochalimaea henselae).